The primary structure comprises 203 residues: Coupling of ubiquitin conjugation to ER degradation protein 1 (203 aa).

At 1-6 (MEDSRL) the chain is on the lumenal side. The chain crosses the membrane as a helical span at residues 7 to 23 (LITLILVFGVIFLKKFF). The Cytoplasmic portion of the chain corresponds to 24–203 (QSNQHPSAQR…SDKDLQSLLT (180 aa)). Residues 36 to 61 (ATGVNAHGRPQGSTQNALRRTGRVNG) form a disordered region. Residues 65–107 (VTTQMVETVQNLAPNLHPEQIRYSLENTGSVEETVERYLRGDE) form the CUE domain.

The protein belongs to the CUE1 family. In terms of assembly, forms a heterodimer with UBC7. Interacts with SSM4/DOA10 and UBX2/SEL1.

The protein localises to the endoplasmic reticulum membrane. Functionally, component of the endoplasmic reticulum-associated protein degradation (ERAD) pathway. Recruits the soluble ubiquitin-conjugating enzyme UBC7 to the cytoplasmic face of the endoplasmic reticulum membrane where it functions in degradation of misfolded or regulated proteins localized in the endoplasmic reticulum (ER) lumen or membrane via the ubiquitin-proteasome system. Targets the E2 conjugating enzyme UBC7 to the DOA10 ubiquitin ligase complex, which is part of the ERAD-C pathway responsible for the rapid degradation of membrane proteins with misfolded cytoplasmic domains, and to the HRD1 ubiquitin ligase complex, which is part of the ERAD-L and ERAD-M pathways responsible for the rapid degradation of soluble lumenal and membrane proteins with misfolded lumenal domains (ERAD-L), or ER-membrane proteins with misfolded transmembrane domains (ERAD-M). Also has a role in cold adaptation, perhaps through effects on sterol biosynthesis. In Saccharomyces cerevisiae (strain ATCC 204508 / S288c) (Baker's yeast), this protein is Coupling of ubiquitin conjugation to ER degradation protein 1 (CUE1).